We begin with the raw amino-acid sequence, 151 residues long: Probable ubiquitin-conjugating enzyme E2 W-A (151 aa).

The region spanning 3 to 151 is the UBC core domain; it reads SMQKRLQKEL…TKWWYHDDTC (149 aa). Residue C91 is the Glycyl thioester intermediate of the active site.

This sequence belongs to the ubiquitin-conjugating enzyme family.

The protein localises to the nucleus. The catalysed reaction is S-ubiquitinyl-[E1 ubiquitin-activating enzyme]-L-cysteine + [E2 ubiquitin-conjugating enzyme]-L-cysteine = [E1 ubiquitin-activating enzyme]-L-cysteine + S-ubiquitinyl-[E2 ubiquitin-conjugating enzyme]-L-cysteine.. It carries out the reaction S-ubiquitinyl-[E1 ubiquitin-activating enzyme]-L-cysteine + [acceptor protein]-N-terminal-amino acid = [E1 ubiquitin-activating enzyme]-L-cysteine + N-terminal-ubiquitinyl-[acceptor protein].. It participates in protein modification; protein ubiquitination. Accepts ubiquitin from the E1 complex and catalyzes its covalent attachment to other proteins. Catalyzes monoubiquitination. Involved in degradation of misfolded chaperone substrate and DNA repair. This is Probable ubiquitin-conjugating enzyme E2 W-A (ube2wa) from Danio rerio (Zebrafish).